The primary structure comprises 215 residues: MFITFEGLDGSGKTTIVQKLVEKLLEKKPALSFIVTREPGGKNVRESEKIRELILDKESRLSPISEALLYTASRRIHIEKVILPALKENKLVLCDRYIDSFYAYQGIVRGLGLSFAKQLTEMVIESTIPDITIFIDITAEQSEYRRNVSRLISDRLDSESLEFHKKVFDAYKEVINLDPKRFIIVNGLQSIPEILDEIVEKLFQNKKFDEWWKNN.

7-14 (GLDGSGKT) is an ATP binding site.

This sequence belongs to the thymidylate kinase family.

It catalyses the reaction dTMP + ATP = dTDP + ADP. In terms of biological role, phosphorylation of dTMP to form dTDP in both de novo and salvage pathways of dTTP synthesis. In Mycoplasmopsis agalactiae (strain NCTC 10123 / CIP 59.7 / PG2) (Mycoplasma agalactiae), this protein is Thymidylate kinase.